The primary structure comprises 209 residues: uncharacterized protein (209 aa).

The protein localises to the plastid. Its subcellular location is the chloroplast. This is an uncharacterized protein from Porphyra purpurea (Red seaweed).